Reading from the N-terminus, the 74-residue chain is Large ribosomal subunit protein uL29 (74 aa).

It belongs to the universal ribosomal protein uL29 family.

This is Large ribosomal subunit protein uL29 (rpmC) from Streptomyces coelicolor (strain ATCC BAA-471 / A3(2) / M145).